Reading from the N-terminus, the 350-residue chain is GDSL esterase/lipase At4g10955 (350 aa).

The protein belongs to the 'GDSL' lipolytic enzyme family.

The chain is GDSL esterase/lipase At4g10955 from Arabidopsis thaliana (Mouse-ear cress).